The following is a 700-amino-acid chain: Elongation factor G 2 (700 aa).

Residues 8 to 290 form the tr-type G domain; sequence ERYRNIGISA…AVIDFLPSPV (283 aa). Residues 17-24, 88-92, and 142-145 each bind GTP; these read AHIDAGKT, DTPGH, and NKMD.

This sequence belongs to the TRAFAC class translation factor GTPase superfamily. Classic translation factor GTPase family. EF-G/EF-2 subfamily.

It is found in the cytoplasm. Functionally, catalyzes the GTP-dependent ribosomal translocation step during translation elongation. During this step, the ribosome changes from the pre-translocational (PRE) to the post-translocational (POST) state as the newly formed A-site-bound peptidyl-tRNA and P-site-bound deacylated tRNA move to the P and E sites, respectively. Catalyzes the coordinated movement of the two tRNA molecules, the mRNA and conformational changes in the ribosome. This is Elongation factor G 2 from Burkholderia mallei (strain ATCC 23344).